A 78-amino-acid polypeptide reads, in one-letter code: Large ribosomal subunit protein bL28 (78 aa).

The tract at residues 1–31 is disordered; it reads MAAHCQVTGAEPGFGHSISHSHRRNKRRFDP.

It belongs to the bacterial ribosomal protein bL28 family.

The protein is Large ribosomal subunit protein bL28 of Pseudarthrobacter chlorophenolicus (strain ATCC 700700 / DSM 12829 / CIP 107037 / JCM 12360 / KCTC 9906 / NCIMB 13794 / A6) (Arthrobacter chlorophenolicus).